The chain runs to 70 residues: Large ribosomal subunit protein bL31 (70 aa).

4 residues coordinate Zn(2+): Cys16, Cys18, Cys37, and Cys40.

Belongs to the bacterial ribosomal protein bL31 family. Type A subfamily. Part of the 50S ribosomal subunit. Zn(2+) serves as cofactor.

Binds the 23S rRNA. In Pasteurella multocida (strain Pm70), this protein is Large ribosomal subunit protein bL31.